Reading from the N-terminus, the 476-residue chain is MLAEIKGLNEECGVFGIWGHEEAPQITYYGLHSLQHRGQEGAGIVATDGEKLTAHKGQGLITEVFQNGELSKVKGKGAIGHVRYATAGGGGYENVQPLLFRSQNNGSLALAHNGNLVNATQLKQQLENQGSIFQTSSDTEVLAHLIKRSGHFTLKDQIKNSLSMLKGAYAFLIMTETEMIVALDPNGLRPLSIGMMGDAYVVASETCAFDVVGATYLREVEPGEMLIINDEGMKSERFSMNINRSICSMEYIYFSRPDSNIDGINVHSARKNLGKMLAQESAVEADVVTGVPDSSISAAIGYAEATGIPYELGLIKNRYVGRTFIQPSQALREQGVRMKLSAVRGVVEGKRVVMVDDSIVRGTTSRRIVTMLREAGATEVHVKISSPPIAHPCFYGIDTSTHEELIASSHSVEEIRQEIGADTLSFLSVEGLLKGIGRKYDDSNCGQCLACFTGKYPTEIYQDTVLPHVKEAVLTK.

The propeptide occupies 1–11 (MLAEIKGLNEE). Cys-12 functions as the Nucleophile in the catalytic mechanism. The 220-residue stretch at 12-231 (CGVFGIWGHE…PGEMLIINDE (220 aa)) folds into the Glutamine amidotransferase type-2 domain. Cys-247 serves as a coordination point for [4Fe-4S] cluster. Residues Ser-294, Asp-356, and Asp-357 each contribute to the Mg(2+) site. Cys-393, Cys-448, and Cys-451 together coordinate [4Fe-4S] cluster.

The protein in the C-terminal section; belongs to the purine/pyrimidine phosphoribosyltransferase family. In terms of assembly, homotetramer. Mg(2+) is required as a cofactor. The cofactor is [4Fe-4S] cluster.

It carries out the reaction 5-phospho-beta-D-ribosylamine + L-glutamate + diphosphate = 5-phospho-alpha-D-ribose 1-diphosphate + L-glutamine + H2O. It functions in the pathway purine metabolism; IMP biosynthesis via de novo pathway; N(1)-(5-phospho-D-ribosyl)glycinamide from 5-phospho-alpha-D-ribose 1-diphosphate: step 1/2. Allosterically regulated; subject to end product regulation by purine nucleotides. Functionally, catalyzes the formation of phosphoribosylamine from phosphoribosylpyrophosphate (PRPP) and glutamine. This Bacillus subtilis (strain 168) protein is Amidophosphoribosyltransferase.